Here is a 161-residue protein sequence, read N- to C-terminus: Trivalent organoarsenical cleaving enzyme (161 aa).

The VOC domain maps to 2 to 119 (KYAHVGLNVT…DGNEWEFFYT (118 aa)). Residues His-5 and His-62 each coordinate Fe(2+). Roxarsone (III) contacts are provided by Cys-96 and Cys-97. Glu-115 contributes to the Fe(2+) binding site.

Fe(2+) serves as cofactor.

It carries out the reaction methylarsonous acid + AH2 + O2 = arsenite + methanol + A + H(+). The enzyme catalyses roxarsone (III) + AH2 + O2 = 4-hydroxy-3-nitrocyclohexa-2,5-dien-1-one + arsenite + A + H(+). The catalysed reaction is nitarsone (III) + AH2 + O2 = 4-nitrocyclohexa-2,5-dien-1-one + arsenite + A + H(+). It catalyses the reaction 4-aminophenylarsonous acid + AH2 + O2 = 4-aminocyclohexa-2,5-dien-1-one + arsenite + A. Inhibited in vitro by reagents that chemically modify histidine residues (diethylpyrocarbonate (DEPC)), aspartate or glutamate residues (1-ethyl-3-(3-(dimethylamino)propyl) carbodiimide (EDC)), or cysteine residues (N-ethylmaleimide (NEM) or iodoacetamide (IAA)). Nonheme iron-dependent dioxygenase that can break carbon-arsenic bonds, playing a role in the detoxification of environmental organoarsenical compounds. Catalyzes the oxygen-dependent demethylation of highly toxic methylarsonous acid (MAs(III)) to arsenite, which can then be exported out of the cell. Can also cleave the C-As bond in several trivalent aromatic arsenicals, including roxarsone (III), nitarsone (III) and (4-aminophenyl)arsonous acid. Organoarsenical degradation by this enzyme is proposed to have a significant impact on the arsenic biogeocycle that maintains a balance between organic and inorganic species. This is Trivalent organoarsenical cleaving enzyme from Bacillus sp. (strain MD1).